A 70-amino-acid chain; its full sequence is UPF0519 protein D (70 aa).

Belongs to the UPF0519 family.

The chain is UPF0519 protein D from Dictyostelium discoideum (Social amoeba).